The sequence spans 232 residues: tRNA (guanine-N(1)-)-methyltransferase (232 aa).

S-adenosyl-L-methionine is bound by residues glycine 112 and 132–137; that span reads IGDYVL.

The protein belongs to the RNA methyltransferase TrmD family. In terms of assembly, homodimer.

The protein localises to the cytoplasm. It catalyses the reaction guanosine(37) in tRNA + S-adenosyl-L-methionine = N(1)-methylguanosine(37) in tRNA + S-adenosyl-L-homocysteine + H(+). In terms of biological role, specifically methylates guanosine-37 in various tRNAs. The sequence is that of tRNA (guanine-N(1)-)-methyltransferase from Anaplasma phagocytophilum (strain HZ).